A 167-amino-acid polypeptide reads, in one-letter code: Photosystem I assembly protein Ycf3 (167 aa).

TPR repeat units follow at residues 35-68, 72-105, and 120-153; these read AFSY…EEDP, SFIL…NNKL, and AVKA…APSN.

Belongs to the Ycf3 family.

The protein localises to the plastid. It localises to the chloroplast thylakoid membrane. In terms of biological role, essential for the assembly of the photosystem I (PSI) complex. May act as a chaperone-like factor to guide the assembly of the PSI subunits. The polypeptide is Photosystem I assembly protein Ycf3 (Galdieria sulphuraria (Red alga)).